We begin with the raw amino-acid sequence, 397 residues long: Acetate kinase (397 aa).

Asn8 contacts Mg(2+). An ATP-binding site is contributed by Lys15. A substrate-binding site is contributed by Arg89. The Proton donor/acceptor role is filled by Asp146. ATP is bound by residues 206–210 (HLGNG), 281–283 (DLR), and 329–333 (GVGEN). Glu382 serves as a coordination point for Mg(2+).

This sequence belongs to the acetokinase family. Homodimer. Mg(2+) serves as cofactor. The cofactor is Mn(2+).

It is found in the cytoplasm. It catalyses the reaction acetate + ATP = acetyl phosphate + ADP. It participates in metabolic intermediate biosynthesis; acetyl-CoA biosynthesis; acetyl-CoA from acetate: step 1/2. In terms of biological role, catalyzes the formation of acetyl phosphate from acetate and ATP. Can also catalyze the reverse reaction. In Bacillus anthracis, this protein is Acetate kinase.